The sequence spans 602 residues: MARLTKRRQADTKAIQHLWAAIEIIRNQKQIANIDRITKYMSRVHGMHPKETTRQLSLAVKDGLIVETLTVGCKGSKAGIEQEGYWLPGDEIDWETENHDWYCFECHLPGEVLICDLCFRVYHSKCLSDEFRLRDSSSPWQCPVCRSIKKKNTNKQEMGTYLRFIVSRMKERAIDLNKKGKDNKHPMYRRLVHSAVDVPTIQEKVNEGKYRSYEEFKADAQLLLHNTVIFYGADSEQADIARMLYKDTCHELDELQLCKNCFYLSNARPDNWFCYPCIPNHELVWAKMKGFGFWPAKVMQKEDNQVDVRFFGHHHQRAWIPSENIQDITVNIHRLHVKRSMGWKKACDELELHQRFLREGRFWKSKNEDRGEEEAESSISSTSNEQLKVTQEPRAKKGRRNQSVEPKKEEPEPETEAVSSSQEIPTMPQPIEKVSVSTQTKKLSASSPRMLHRSTQTTNDGVCQSMCHDKYTKIFNDFKDRMKSDHKRETERVVREALEKLRSEMEEEKRQAVNKAVANMQGEMDRKCKQVKEKCKEEFVEEIKKLATQHKQLISQTKKKQWCYNCEEEAMYHCCWNTSYCSIKCQQEHWHAEHKRTCRRKR.

One can recognise an SAMD1-like winged helix (WH) domain in the interval 6 to 82; that stretch reads KRRQADTKAI…CKGSKAGIEQ (77 aa). Residues 100–148 form a PHD-type zinc finger; the sequence is DWYCFECHLPGEVLICDLCFRVYHSKCLSDEFRLRDSSSPWQCPVCRSI. The 107-residue stretch at 149-255 folds into the Bromo domain; it reads KKKNTNKQEM…KDTCHELDEL (107 aa). Zn(2+) is bound by residues C258, C261, C277, and H281. The PWWP domain occupies 280-331; sequence NHELVWAKMKGFGFWPAKVMQKEDNQVDVRFFGHHHQRAWIPSENIQDITVN. Residue K366 forms a Glycyl lysine isopeptide (Lys-Gly) (interchain with G-Cter in SUMO2) linkage. The segment at 366 to 459 is disordered; sequence KNEDRGEEEA…MLHRSTQTTN (94 aa). A Nuclear localization signal motif is present at residues 394–400; that stretch reads RAKKGRR. Residues K407 and K408 each participate in a glycyl lysine isopeptide (Lys-Gly) (interchain with G-Cter in SUMO2) cross-link. Residue S421 is modified to Phosphoserine. Over residues 435-459 the composition is skewed to polar residues; it reads SVSTQTKKLSASSPRMLHRSTQTTN. Positions 452–572 are interaction with human adenovirus E1A; sequence HRSTQTTNDG…CYNCEEEAMY (121 aa). Residues C563, C566, C574, C575, C581, C585, H594, and C598 each coordinate Zn(2+). Residues 563 to 598 form an MYND-type zinc finger; sequence CYNCEEEAMYHCCWNTSYCSIKCQQEHWHAEHKRTC.

In terms of assembly, homooligomer; forms homooligomers via its C-terminus. Interacts with histone H3.3 trimethylated at 'Lys-36' (H3.3K36me3). Interacts (via MYND-type zinc finger) with NCOR1. Interacts (via MYND-type zinc finger) with MGA protein (via PXLXP motif). Interacts (via MYND-type zinc finger) with EZH2. Interacts with EMSY and E2F6. Interacts with PIAS1 and UBE2I. (Microbial infection) Interacts (via MYND-type zinc finger) with human adenovirus early E1A protein (via PXLXP motif); this interaction inhibits E1A mediated transactivation. As to quaternary structure, (Microbial infection) Interacts (via MYND-type zinc finger) with Epstein-Barr virus EBNA2 protein (via PXLXP motif). Interacts with Epstein-Barr virus-derived protein LMP1; leading to negatively regulate NF-kappa-B activation by Epstein-Barr virus-derived protein LMP1. Sumoylated following its interaction with PIAS1 and UBE2I. Post-translationally, ubiquitinated, leading to proteasomal degradation. As to expression, ubiquitous.

Its subcellular location is the nucleus. The protein localises to the chromosome. Its function is as follows. Chromatin reader that specifically recognizes and binds histone H3.3 trimethylated at 'Lys-36' (H3.3K36me3) and regulates RNA polymerase II elongation. Does not bind other histone H3 subtypes (H3.1 or H3.2). Colocalizes with highly expressed genes and functions as a transcription corepressor by modulating RNA polymerase II at the elongation stage. Binds non-specifically to dsDNA. Acts as a tumor-suppressor by repressing a transcriptional program essential for tumor cell growth. In terms of biological role, (Microbial infection) Inhibits Epstein-Barr virus EBNA2-mediated transcriptional activation and host cell proliferation, through direct interaction. This Homo sapiens (Human) protein is Zinc finger MYND domain-containing protein 11.